We begin with the raw amino-acid sequence, 182 residues long: MSIEVFNESGRGEVNEEELIDVARYALWTLDVHPAAELSIHIVDLETIEDLHVRWMDLPGPTDVMSFPMDELTPGWGRKDAAEPSPAMLGDIMLCPDFAEGQATRAGHSLAHELDLLTVHGVLHLLGFDHVTPEDEQKMFALQNEILANWYDSQEERGVSFAPKPTGAGAFPSAADRDDTQN.

Residues His-120, His-124, and His-130 each coordinate Zn(2+). Residues 157 to 182 form a disordered region; that stretch reads RGVSFAPKPTGAGAFPSAADRDDTQN.

Belongs to the endoribonuclease YbeY family. Zn(2+) is required as a cofactor.

It localises to the cytoplasm. Functionally, single strand-specific metallo-endoribonuclease involved in late-stage 70S ribosome quality control and in maturation of the 3' terminus of the 16S rRNA. This is Endoribonuclease YbeY from Corynebacterium jeikeium (strain K411).